An 88-amino-acid chain; its full sequence is Small ribosomal subunit protein uS17 (88 aa).

Belongs to the universal ribosomal protein uS17 family. Part of the 30S ribosomal subunit.

In terms of biological role, one of the primary rRNA binding proteins, it binds specifically to the 5'-end of 16S ribosomal RNA. This is Small ribosomal subunit protein uS17 from Oleidesulfovibrio alaskensis (strain ATCC BAA-1058 / DSM 17464 / G20) (Desulfovibrio alaskensis).